A 317-amino-acid chain; its full sequence is Malate dehydrogenase (317 aa).

Residues 10 to 15 (GGGQIG) and aspartate 34 each bind NAD(+). Positions 83 and 89 each coordinate substrate. NAD(+) is bound by residues asparagine 96 and 119–121 (ISN). The substrate site is built by asparagine 121 and arginine 152. Catalysis depends on histidine 176, which acts as the Proton acceptor.

The protein belongs to the LDH/MDH superfamily. MDH type 3 family.

The catalysed reaction is (S)-malate + NAD(+) = oxaloacetate + NADH + H(+). In terms of biological role, catalyzes the reversible oxidation of malate to oxaloacetate. The sequence is that of Malate dehydrogenase from Geobacter sulfurreducens (strain ATCC 51573 / DSM 12127 / PCA).